We begin with the raw amino-acid sequence, 529 residues long: Cytochrome P450 monooxygenase 45 (529 aa).

The helical transmembrane segment at 24–44 (VLTICILALLTFVLREIVLYF) threads the bilayer. N-linked (GlcNAc...) asparagine glycans are attached at residues Asn-185 and Asn-322. Residue Cys-454 coordinates heme.

This sequence belongs to the cytochrome P450 family. The cofactor is heme.

The protein localises to the membrane. Its pathway is secondary metabolite biosynthesis. Functionally, cytochrome P450 monooxygenase that is able to use trans-stilbene as a substrate for oxidation. The protein is Cytochrome P450 monooxygenase 45 of Postia placenta (strain ATCC 44394 / Madison 698-R) (Brown rot fungus).